Here is a 199-residue protein sequence, read N- to C-terminus: Inducible T-cell costimulator (199 aa).

The first 20 residues, Met1–Gly20, serve as a signal peptide directing secretion. At Glu21–Lys140 the chain is on the extracellular side. The region spanning Met30–Glu132 is the Ig-like V-type domain. 2 disulfide bridges follow: Cys42–Cys109 and Cys63–Cys83. Asn89 and Asn110 each carry an N-linked (GlcNAc...) asparagine glycan. The helical transmembrane segment at Phe141–Ile161 threads the bilayer. Over Cys162–Leu199 the chain is Cytoplasmic.

Homodimer; disulfide-linked. Interacts with ICOSLG. Interacts with PIK3R1. Interacts with TBK1; this interaction is critical for the maturation of T follicular regulatory cells. In terms of processing, N-glycosylated. Activated T-cells. Highly expressed on tonsillar T-cells, which are closely associated with B-cells in the apical light zone of germinal centers, the site of terminal B-cell maturation. Expressed at lower levels in thymus, lung, lymph node and peripheral blood leukocytes. Expressed in the medulla of fetal and newborn thymus.

It is found in the cell membrane. The protein resides in the secreted. In terms of biological role, stimulatory receptor expressed in activated or antigen-experienced T-cells that plays an important role in the immune response. Upon binding to its ligand ICOSL expressed on antigen presenting cells (APCs), delivers costimulatory signals that enhances all basic T-cell responses to a foreign antigen, namely proliferation, secretion of lymphokines including IL10, up-regulation of molecules that mediate cell-cell interaction, and effective help for antibody secretion by B-cells. Also acts as a costimulatory receptor critical for the differentiation of T follicular regulatory cells upon immune challenges such as viral infection. Mechanistically, potentiates TCR-induced calcium flux by augmenting PLCG1 activation and actin remodeling. In addition, activates PI3K signaling pathways independently of calcium flux. Essential both for efficient interaction between T and B-cells and for normal antibody responses to T-cell dependent antigens. Prevents the apoptosis of pre-activated T-cells. Plays a critical role in CD40-mediated class switching of immunoglobin isotypes. This is Inducible T-cell costimulator (ICOS) from Homo sapiens (Human).